The primary structure comprises 208 residues: Thymidylate kinase (208 aa).

10–17 provides a ligand contact to ATP; it reads GPEGSGKT.

Belongs to the thymidylate kinase family.

The enzyme catalyses dTMP + ATP = dTDP + ADP. In terms of biological role, phosphorylation of dTMP to form dTDP in both de novo and salvage pathways of dTTP synthesis. In Bacillus cereus (strain Q1), this protein is Thymidylate kinase.